A 328-amino-acid chain; its full sequence is tRNA dimethylallyltransferase (328 aa).

23-30 (GPTASGKS) lines the ATP pocket. 25-30 (TASGKS) is a binding site for substrate. The interaction with substrate tRNA stretch occupies residues 48–51 (DSMQ).

This sequence belongs to the IPP transferase family. In terms of assembly, monomer. Mg(2+) serves as cofactor.

The catalysed reaction is adenosine(37) in tRNA + dimethylallyl diphosphate = N(6)-dimethylallyladenosine(37) in tRNA + diphosphate. Catalyzes the transfer of a dimethylallyl group onto the adenine at position 37 in tRNAs that read codons beginning with uridine, leading to the formation of N6-(dimethylallyl)adenosine (i(6)A). This Rhodopseudomonas palustris (strain BisA53) protein is tRNA dimethylallyltransferase.